The chain runs to 447 residues: Cobyrinate a,c-diamide synthase (447 aa).

A GATase cobBQ-type domain is found at 252–439 (KIAIAFDESF…AHQHAVGNPY (188 aa)). The active-site Nucleophile is the cysteine 331.

Belongs to the CobB/CbiA family. Mg(2+) is required as a cofactor.

The catalysed reaction is cob(II)yrinate + 2 L-glutamine + 2 ATP + 2 H2O = cob(II)yrinate a,c diamide + 2 L-glutamate + 2 ADP + 2 phosphate + 2 H(+). The enzyme catalyses Ni-sirohydrochlorin + 2 L-glutamine + 2 ATP + 2 H2O = Ni-sirohydrochlorin a,c-diamide + 2 L-glutamate + 2 ADP + 2 phosphate + 2 H(+). The protein operates within cofactor biosynthesis; adenosylcobalamin biosynthesis; cob(II)yrinate a,c-diamide from sirohydrochlorin (anaerobic route): step 10/10. Catalyzes the ATP-dependent amidation of the two carboxylate groups at positions a and c of cobyrinate, using either L-glutamine or ammonia as the nitrogen source. Involved in the biosynthesis of the unique nickel-containing tetrapyrrole coenzyme F430, the prosthetic group of methyl-coenzyme M reductase (MCR), which plays a key role in methanogenesis and anaerobic methane oxidation. Catalyzes the ATP-dependent amidation of the two carboxylate groups at positions a and c of Ni-sirohydrochlorin, using L-glutamine or ammonia as the nitrogen source. In Methanococcus vannielii (strain ATCC 35089 / DSM 1224 / JCM 13029 / OCM 148 / SB), this protein is Cobyrinate a,c-diamide synthase.